Reading from the N-terminus, the 450-residue chain is Tubulin alpha chain (450 aa).

Glutamine 11 is a GTP binding site. Position 40 is an N6-acetyllysine (lysine 40). 7 residues coordinate GTP: glutamate 71, serine 140, glycine 144, threonine 145, threonine 179, asparagine 206, and asparagine 228. Glutamate 71 contacts Mg(2+). Glutamate 254 is a catalytic residue.

The protein belongs to the tubulin family. As to quaternary structure, dimer of alpha and beta chains. A typical microtubule is a hollow water-filled tube with an outer diameter of 25 nm and an inner diameter of 15 nM. Alpha-beta heterodimers associate head-to-tail to form protofilaments running lengthwise along the microtubule wall with the beta-tubulin subunit facing the microtubule plus end conferring a structural polarity. Microtubules usually have 13 protofilaments but different protofilament numbers can be found in some organisms and specialized cells. The cofactor is Mg(2+). In terms of processing, acetylation of alpha chains at Lys-40 stabilizes microtubules and affects affinity and processivity of microtubule motors. This modification has a role in multiple cellular functions, ranging from cell motility, cell cycle progression or cell differentiation to intracellular trafficking and signaling.

The protein localises to the cytoplasm. Its subcellular location is the cytoskeleton. It carries out the reaction GTP + H2O = GDP + phosphate + H(+). In terms of biological role, tubulin is the major constituent of microtubules, a cylinder consisting of laterally associated linear protofilaments composed of alpha- and beta-tubulin heterodimers. Microtubules grow by the addition of GTP-tubulin dimers to the microtubule end, where a stabilizing cap forms. Below the cap, tubulin dimers are in GDP-bound state, owing to GTPase activity of alpha-tubulin. In Euplotoides octocarinatus (Freshwater ciliate), this protein is Tubulin alpha chain.